Consider the following 278-residue polypeptide: Digeranylgeranylglyceryl phosphate synthase (278 aa).

Transmembrane regions (helical) follow at residues 15 to 35 (VIGSAISVFMGYVVASEWKIV), 36 to 56 (PIKLILAMIVVSVIAAGGYII), 89 to 109 (IVLFLVGIVLSVLLNIYAFII), 133 to 153 (LIVALTSALSAFYGGLAFFEG), 159 to 179 (TLIPTLYIFFFTLTREFVKGI), 203 to 223 (WFISKIILVILIVTSFIPYFF), 225 to 245 (FNIIYLIGILFLDIILILVVL), and 258 to 278 (AYMKVYALGTLILFALGTLPI).

Belongs to the UbiA prenyltransferase family. DGGGP synthase subfamily. Mg(2+) is required as a cofactor.

It is found in the cell membrane. It carries out the reaction sn-3-O-(geranylgeranyl)glycerol 1-phosphate + (2E,6E,10E)-geranylgeranyl diphosphate = 2,3-bis-O-(geranylgeranyl)-sn-glycerol 1-phosphate + diphosphate. The protein operates within membrane lipid metabolism; glycerophospholipid metabolism. Functionally, prenyltransferase that catalyzes the transfer of the geranylgeranyl moiety of geranylgeranyl diphosphate (GGPP) to the C2 hydroxyl of (S)-3-O-geranylgeranylglyceryl phosphate (GGGP). This reaction is the second ether-bond-formation step in the biosynthesis of archaeal membrane lipids. This Sulfurisphaera tokodaii (strain DSM 16993 / JCM 10545 / NBRC 100140 / 7) (Sulfolobus tokodaii) protein is Digeranylgeranylglyceryl phosphate synthase.